Here is a 44-residue protein sequence, read N- to C-terminus: YDNVNLDEILANDRLLVPYIKCLLDEGKKAPDAKELKEHIRXAL.

Belongs to the insect A10/OS-D protein family.

It is found in the secreted. Its function is as follows. Has antibacterial activity against the Gram-negative bacteria E.coli and E.cloacae, but not against the Gram-negative bacteria P.aeruginosa, P.vulgaris, K.pneumoniae and S.enteritidis or the Gram-positive bacteria S.aureus, S.epidermidis and S.salivarius. In Heliothis virescens (Tobacco budworm moth), this protein is Viresin.